Reading from the N-terminus, the 296-residue chain is Remorin 4.1 (296 aa).

3 disordered regions span residues Met-1 to Asn-78, Thr-121 to Pro-142, and Glu-242 to Arg-266. Positions Ala-21 to His-39 are enriched in basic and acidic residues. Composition is skewed to polar residues over residues Met-41–Arg-53 and Pro-62–Asn-78. Basic and acidic residues-rich tracts occupy residues Thr-121–Val-135 and Arg-253–Arg-266. The stretch at Met-226–Thr-261 forms a coiled coil.

It belongs to the remorin family. As to quaternary structure, forms homodimer and heterodimer with REM4.2. Interacts with KIN11. Post-translationally, phosphorylated by KIN11. Probably ubiquitinated and degraded by the 26S proteasome pathway. As to expression, predominantly detected in bud, stem, root, flower, silique, and leaves, and enhanced dramatically in senescence leaf.

The protein resides in the cell membrane. Functionally, collaborates with REM4.2 to positively regulate the BCTV and BSCTV susceptibility. The chain is Remorin 4.1 from Arabidopsis thaliana (Mouse-ear cress).